A 1050-amino-acid polypeptide reads, in one-letter code: Calmodulin-binding transcription activator 2 (1050 aa).

The CG-1 DNA-binding region spans 15–141; sequence IKQLLSEAQH…YLEVKGNRMS (127 aa). 2 stretches are compositionally biased toward polar residues: residues 141 to 171 and 183 to 196; these read STSG…SSIL and SRQA…NPEP. Disordered stretches follow at residues 141–196 and 223–246; these read STSG…NPEP and NRDG…SGDV. 2 ANK repeats span residues 661–690 and 694–723; these read DGQG…SINF and NGWS…DAGA. IQ domains are found at residues 870–899 and 893–922; these read VHAA…RIVK and IRQR…SVGL. A calmodulin-binding region spans residues 918 to 940; the sequence is WSVGLLEKIILRWRRKGSGLRGF. Residues 957–985 are a coiled coil; sequence QEDDYDFLKEGRKQTEERLQKALTRVKSM. S984 carries the post-translational modification Phosphoserine.

It belongs to the CAMTA family. In terms of tissue distribution, expressed in roots, stems, old leaves, petals, sepals, top of carpels, stigmas, stamen filaments, anthers and siliques, but not in pollen.

It localises to the nucleus. Its function is as follows. Transcription activator that binds to the DNA consensus sequence 5'-[ACG]CGCG[GTC]-3'. Regulates transcriptional activity in response to calcium signals. Binds calmodulin in a calcium-dependent manner. Involved in freezing tolerance in association with CAMTA1 and CAMTA3. Contributes together with CAMTA1 and CAMTA3 to the positive regulation of the cold-induced expression of DREB1A/CBF3, DREB1B/CBF1 and DREB1C/CBF2. Involved together with CAMTA3 and CAMTA4 in the positive regulation of a general stress response. Involved in tolerance to aluminum. Binds to the promoter of ALMT1 transporter and contributes to the positive regulation of aluminum-induced expression of ALMT1. The polypeptide is Calmodulin-binding transcription activator 2 (Arabidopsis thaliana (Mouse-ear cress)).